Consider the following 199-residue polypeptide: NADH-quinone oxidoreductase subunit C (199 aa).

This sequence belongs to the complex I 30 kDa subunit family. NDH-1 is composed of 14 different subunits. Subunits NuoB, C, D, E, F, and G constitute the peripheral sector of the complex.

The protein localises to the cell inner membrane. It catalyses the reaction a quinone + NADH + 5 H(+)(in) = a quinol + NAD(+) + 4 H(+)(out). Its function is as follows. NDH-1 shuttles electrons from NADH, via FMN and iron-sulfur (Fe-S) centers, to quinones in the respiratory chain. The immediate electron acceptor for the enzyme in this species is believed to be ubiquinone. Couples the redox reaction to proton translocation (for every two electrons transferred, four hydrogen ions are translocated across the cytoplasmic membrane), and thus conserves the redox energy in a proton gradient. This Polynucleobacter necessarius subsp. necessarius (strain STIR1) protein is NADH-quinone oxidoreductase subunit C.